Consider the following 1342-residue polypeptide: DNA-directed RNA polymerase subunit beta (1342 aa).

It belongs to the RNA polymerase beta chain family. In terms of assembly, the RNAP catalytic core consists of 2 alpha, 1 beta, 1 beta' and 1 omega subunit. When a sigma factor is associated with the core the holoenzyme is formed, which can initiate transcription.

It carries out the reaction RNA(n) + a ribonucleoside 5'-triphosphate = RNA(n+1) + diphosphate. DNA-dependent RNA polymerase catalyzes the transcription of DNA into RNA using the four ribonucleoside triphosphates as substrates. This is DNA-directed RNA polymerase subunit beta from Colwellia psychrerythraea (strain 34H / ATCC BAA-681) (Vibrio psychroerythus).